Here is a 229-residue protein sequence, read N- to C-terminus: uncharacterized protein (229 aa).

This is an uncharacterized protein from Sulfolobus islandicus filamentous virus (isolate Iceland/Hveragerdi) (SIFV).